The following is a 510-amino-acid chain: Monocarboxylate transporter 14 (510 aa).

Over 1–27 (MYTSHEDIGYDFEDGPKDKKTLKPHPN) the chain is Cytoplasmic. 6 helical membrane passes run 28 to 48 (IDGG…ILIM), 74 to 94 (WVSS…GLFI), 103 to 123 (AIIG…AANV), 127 to 147 (FITF…PAVV), 159 to 179 (LAQG…TVLL), and 191 to 209 (AMLI…GALM). Residues 214 to 255 (PGKNPNDPGEKDVRGLPAHSTESVKSTGQQGRTEEKDGGLGN) form a disordered region. Polar residues predominate over residues 233-244 (STESVKSTGQQG). A run of 6 helical transmembrane segments spans residues 315–335 (MFVA…IPFI), 353–373 (FPLT…LGVI), 379–399 (ISVW…IFIL), 408–428 (LAVI…MPVV), 443–463 (GIII…AGWI), and 474–494 (FYIC…QPCI). At 495–510 (RIIEQSRRKYMDGAHV) the chain is on the cytoplasmic side.

Belongs to the major facilitator superfamily. Monocarboxylate porter (TC 2.A.1.13) family.

The protein resides in the cell membrane. Functionally, proton-linked monocarboxylate transporter. May catalyze the transport of monocarboxylates across the plasma membrane. This chain is Monocarboxylate transporter 14 (SLC16A14), found in Homo sapiens (Human).